A 112-amino-acid polypeptide reads, in one-letter code: MMEVTAKLKGAPLSAQKGRLVADMIRNMNVSGALDVLKFTPKKGAKLMLKLLESAIANAENNNGADIDDLKVGMVCVDEATTLKRISPRAKGRANRICKRTCHITIKVSDEE.

The protein belongs to the universal ribosomal protein uL22 family. In terms of assembly, part of the 50S ribosomal subunit.

Its function is as follows. This protein binds specifically to 23S rRNA; its binding is stimulated by other ribosomal proteins, e.g. L4, L17, and L20. It is important during the early stages of 50S assembly. It makes multiple contacts with different domains of the 23S rRNA in the assembled 50S subunit and ribosome. Functionally, the globular domain of the protein is located near the polypeptide exit tunnel on the outside of the subunit, while an extended beta-hairpin is found that lines the wall of the exit tunnel in the center of the 70S ribosome. The protein is Large ribosomal subunit protein uL22 of Legionella pneumophila subsp. pneumophila (strain Philadelphia 1 / ATCC 33152 / DSM 7513).